The following is a 202-amino-acid chain: Ribonuclease HII (202 aa).

One can recognise an RNase H type-2 domain in the interval 11–200 (GLIAGVDEVG…VRKAIEEFNR (190 aa)). A divalent metal cation is bound by residues Asp-17, Glu-18, and Asp-109.

The protein belongs to the RNase HII family. Mn(2+) is required as a cofactor. The cofactor is Mg(2+).

It localises to the cytoplasm. The enzyme catalyses Endonucleolytic cleavage to 5'-phosphomonoester.. Its function is as follows. Endonuclease that specifically degrades the RNA of RNA-DNA hybrids. The chain is Ribonuclease HII from Actinobacillus succinogenes (strain ATCC 55618 / DSM 22257 / CCUG 43843 / 130Z).